We begin with the raw amino-acid sequence, 2378 residues long: MSVTQLKNLKHAIAQLLEWDGTKTARKKIVDEVVLLYHALGAEALSEDNQEIYDLYDLSARIFNLAKKEIEEANQQFEKERKKGTRRSEKPVPTPLFELSIQHLKRCCQQGIDHNQVPWIAYCLKLLEFPITITEKSIENEISNVLLLSSNASQLHWAEHAHLSSLWKWIWSRVETADIGALAMRNYMELAANLLENVDYVVFEKSPIDLMAKVMGTLKKSVEMGNPKEYWCHYRKFSVVHILSYIVHRWGLEARDFILREIFELTGSLSNLISVAHKDGEQSKKCIMRLIDDLVKLAMIETVHGHRTMNEVTRGNIQKLVKTGIQESLKSAHRNFSRSSTFSISEECVRYLTRWLLAERRLEQPSAAMNESFELTGDSSSKKKDDATFDSLIDLSFGSTISGKHKLNAWNGVMQILNELLKSRRLELQVTEKIVTILWEKRKSYTTEPLRTVFCSILSTVVCQADVRFGHRKVPTIDSILKYSLSLMPNVASLPSAAALTETIVRFRTVSREGLRNTWDTVSRTSSGSFEVVRLISALISVTEFDENSRFANDERVRSWSFRKDIIEWVLLDPNAHSHKLLYQLCQYHPTYCYESEASSSDDSLLQTLKLCKLACSPAPPSAPKALRPLEASIEEIVRYVHDKLKSILATEITLPAFVLCHEFALKYPDRSYEFNKMYKKLYQIMEDQEEDEFLQSARHFSKWPQNLTLPIQKQTINCMAVFFEANLDNQLVDLCQWSDRRKVLVEMLAELAATRSEIRDKLQKSMPFNKFVKECIMENRGDLYEMTKRFEKYSFLLSIRNLIVTRMIITNEAARLLGDGETISETDIFIIEKRTLSTCIRNVSEGKELSGYTLDPYTVAANVHNVHFDHINVEIYLELLKKSPFFAQNIVRHLLRQNGKEAEEETWHLHATVLKIVMKDEKLLAVCVATIPNMVRYLKVYQIHFSPKSNAAKFLHLDMESISHCQSYLRKPTKSSNLITAANFLTLFGCEKRTWKRPILRFWSIFKQQPAMCCEKLLIFAEECVELGLNHRIACLLRALTTSEFCRKALCDEYLKIAFQLTYRSIFLILSKNECRPEIVELCDDMNLRYDLLQHQIKHVAAHHLEHFERFETKIAFSVEKFLKSGIDGIDFEDLGLVEFYKQLNENLTEDAIRSNEARNIYIVDILSTIWLQLPSIRPQILPILARFKHISPAWTNFPQPPHISTNEKSFLQHLRFHLYLKMMNISKSMTQGEYATCIMMLLTSYDSSHFVADLIEKKQLGKLKLQQRRNVLCILSRLLKDQAVMGDEDETIIDPILFKAITKASAVFEDTAACIVPFLFKICVDFKGKYDKCVINLLGCLKGVNAEDEIVVRCLAECVDSIGLNVIARYERLNIETHSEFGVKWFFKLSRLFLKHGFTTHSFAIANILFDRLSARKRNTMMIDRTSLDRIDRSQELINLLVEIYVAEGNSVALSSLPPAVQNRPDVRQVMNKSSKEWLKLLSSNQMDSWELTIVQWMCGIQFNAITGDKYLNSILRCNFNEYTKKIDSPLKFVYFQLFHLSTSTLEIEEAISSMPLAPTIDQMRLMIIANATASFEPQSVEEHVVRAVRELRETSNRRKSGGNVKGINEKTTRMVKLAEMLTENKAYDAAINLLDTWEHECLQWTSVAAESIDIDLIRICKQHVTCRSGDPRMADINLRTMHPRVPVMSDLAIAEWSLALSKITIEYRNDMEEGIRILEFGCKHLQNKDSVETRLKVLLKLHSVCIGQLSKLEEYRETRTYRMKQQAVTAFEQQIQNSCRTSLARGNSGDEWTKKTVQRVRKEHQFEKNDLEKVDNSLNSAARKAVSSGFDALLCISQLEDDDEAIRASSLIIFPLIDVIYKYETDVGVIALLKEHTKSKLPSKLWISATSHIASKCFSIEKSQITRHLSQILCHLIYDYPYHVLHTILMYDDEKNASKVKGFLKTIFDARADQRDSSKLKEIVITIREAHQAYREIAMLDVRGNVRIQRVEINGKTMYRWPHDLKIFKCKLRQLPIPTISQKIGCPGDYSTTDLITWKRWKDVFTIADGISTPKIWEIEGSDGKWYKTVWKKDDVRQDVLVEQMFDVTNNMLEKAMLRTYNVVPLDTECGVIEFCGGTVSLKEVMCGVTREGGLHREFNSEEVSASKVSSMMRQVQTESTETRRQVFVEICQQYSPVFRHFFYTNFSTAQIWRQKIINYRQSLATWSIVCYIVGLGDRHASNILFDQKLCTFVHIDLGMILEYSKRTLPVPEQVPFRITRDVLDPILIEGIENGQLAEECTQIMEKLKENGKVILGVASALLRETMTNFREAEQAAGRPSYISEMAIGRLREKLRGTDDGVTAQSSNLQIRRLLREATSADNLSRMFCGWMPFL.

The FAT domain occupies 1415–1937 (LSARKRNTMM…LHTILMYDDE (523 aa)). The region spanning 2044 to 2366 (WKDVFTIADG…LLREATSADN (323 aa)) is the PI3K/PI4K catalytic domain. Residues 2050–2056 (IADGIST) are G-loop. Residues 2218-2226 (GLGDRHASN) are catalytic loop. The interval 2238 to 2263 (HIDLGMILEYSKRTLPVPEQVPFRIT) is activation loop. One can recognise an FATC domain in the interval 2346–2378 (TAQSSNLQIRRLLREATSADNLSRMFCGWMPFL).

It belongs to the PI3/PI4-kinase family. ATM subfamily.

It is found in the nucleus. It catalyses the reaction L-seryl-[protein] + ATP = O-phospho-L-seryl-[protein] + ADP + H(+). It carries out the reaction L-threonyl-[protein] + ATP = O-phospho-L-threonyl-[protein] + ADP + H(+). Serine/threonine protein kinase which activates checkpoint signaling in the presence of DNA double strand breaks (DSBs) and other forms of DNA damage induced by ionizing radiation and other genotoxic stresses such as UV. Plays a role in maintaining genome stability. The chain is Serine/threonine-protein kinase ATM (atm-1) from Caenorhabditis elegans.